Here is a 379-residue protein sequence, read N- to C-terminus: Ribosomal RNA large subunit methyltransferase G (379 aa).

This sequence belongs to the methyltransferase superfamily. RlmG family.

It is found in the cytoplasm. It carries out the reaction guanosine(1835) in 23S rRNA + S-adenosyl-L-methionine = N(2)-methylguanosine(1835) in 23S rRNA + S-adenosyl-L-homocysteine + H(+). Functionally, specifically methylates the guanine in position 1835 (m2G1835) of 23S rRNA. The protein is Ribosomal RNA large subunit methyltransferase G of Serratia proteamaculans (strain 568).